A 71-amino-acid polypeptide reads, in one-letter code: Bowman-Birk type trypsin inhibitor (71 aa).

6 disulfides stabilise this stretch: Cys10-Cys67, Cys11-Cys27, Cys14-Cys63, Cys17-Cys25, Cys35-Cys42, and Cys39-Cys55.

This sequence belongs to the Bowman-Birk serine protease inhibitor family.

Functionally, inhibits trypsin but not chymotrypsin. The chain is Bowman-Birk type trypsin inhibitor from Triticum aestivum (Wheat).